Here is a 410-residue protein sequence, read N- to C-terminus: Multifunctional CCA protein (410 aa).

Residues G8 and R11 each contribute to the ATP site. The CTP site is built by G8 and R11. The Mg(2+) site is built by D21 and D23. Residues R91, R137, and R140 each coordinate ATP. CTP contacts are provided by R91, R137, and R140. One can recognise an HD domain in the interval 225–326 (SGIHTLMTLQ…LNVLKKTDAF (102 aa)).

The protein belongs to the tRNA nucleotidyltransferase/poly(A) polymerase family. Bacterial CCA-adding enzyme type 1 subfamily. Monomer. Can also form homodimers and oligomers. The cofactor is Mg(2+). Ni(2+) serves as cofactor.

The catalysed reaction is a tRNA precursor + 2 CTP + ATP = a tRNA with a 3' CCA end + 3 diphosphate. It catalyses the reaction a tRNA with a 3' CCA end + 2 CTP + ATP = a tRNA with a 3' CCACCA end + 3 diphosphate. Catalyzes the addition and repair of the essential 3'-terminal CCA sequence in tRNAs without using a nucleic acid template. Adds these three nucleotides in the order of C, C, and A to the tRNA nucleotide-73, using CTP and ATP as substrates and producing inorganic pyrophosphate. tRNA 3'-terminal CCA addition is required both for tRNA processing and repair. Also involved in tRNA surveillance by mediating tandem CCA addition to generate a CCACCA at the 3' terminus of unstable tRNAs. While stable tRNAs receive only 3'-terminal CCA, unstable tRNAs are marked with CCACCA and rapidly degraded. In Neisseria gonorrhoeae (strain NCCP11945), this protein is Multifunctional CCA protein.